Here is a 185-residue protein sequence, read N- to C-terminus: Ribosome-recycling factor (185 aa).

It belongs to the RRF family.

The protein resides in the cytoplasm. Responsible for the release of ribosomes from messenger RNA at the termination of protein biosynthesis. May increase the efficiency of translation by recycling ribosomes from one round of translation to another. The polypeptide is Ribosome-recycling factor (Francisella tularensis subsp. tularensis (strain FSC 198)).